The following is a 450-amino-acid chain: Glucose-6-phosphate isomerase (450 aa).

Residue E290 is the Proton donor of the active site. Catalysis depends on residues H311 and K425.

This sequence belongs to the GPI family.

The protein localises to the cytoplasm. It carries out the reaction alpha-D-glucose 6-phosphate = beta-D-fructose 6-phosphate. It participates in carbohydrate biosynthesis; gluconeogenesis. The protein operates within carbohydrate degradation; glycolysis; D-glyceraldehyde 3-phosphate and glycerone phosphate from D-glucose: step 2/4. Its function is as follows. Catalyzes the reversible isomerization of glucose-6-phosphate to fructose-6-phosphate. The protein is Glucose-6-phosphate isomerase of Alkaliphilus metalliredigens (strain QYMF).